The chain runs to 365 residues: Putative F-box protein At1g31000 (365 aa).

In terms of domain architecture, F-box spans 15 to 62 (NDSDSVRIDIVIEIVKRLPLKDVSRFLLVSKLWSEIIRSPYFIRSFPF).

The polypeptide is Putative F-box protein At1g31000 (Arabidopsis thaliana (Mouse-ear cress)).